The chain runs to 310 residues: D-alanine--D-alanine ligase (310 aa).

The region spanning 105–301 (KQAFVSAGIL…FEELVERIIL (197 aa)) is the ATP-grasp domain. An ATP-binding site is contributed by 133–186 (SFGLPLVVKPVQEGSSVGISIVKEESQLAAAVKLAFRHDDEILVEQFIKGQEVQ). Residues aspartate 254, glutamate 267, and asparagine 269 each contribute to the Mg(2+) site.

It belongs to the D-alanine--D-alanine ligase family. Mg(2+) is required as a cofactor. It depends on Mn(2+) as a cofactor.

It is found in the cytoplasm. The enzyme catalyses 2 D-alanine + ATP = D-alanyl-D-alanine + ADP + phosphate + H(+). It functions in the pathway cell wall biogenesis; peptidoglycan biosynthesis. Cell wall formation. In Pelobacter propionicus (strain DSM 2379 / NBRC 103807 / OttBd1), this protein is D-alanine--D-alanine ligase.